The primary structure comprises 518 residues: Serine/threonine-protein kinase UL13 (518 aa).

The disordered stretch occupies residues Met1–Ser119. In terms of domain architecture, Protein kinase spans Pro151 to Ser518. ATP is bound by residues Gly157–Val165 and Lys176. Residue Asp277 is the Proton acceptor of the active site.

Belongs to the protein kinase superfamily. Ser/Thr protein kinase family. Autophosphorylated.

The protein resides in the virion tegument. It is found in the host nucleus. The catalysed reaction is L-seryl-[protein] + ATP = O-phospho-L-seryl-[protein] + ADP + H(+). It carries out the reaction L-threonyl-[protein] + ATP = O-phospho-L-threonyl-[protein] + ADP + H(+). Multifunctional serine/threonine kinase that plays a role in several processes including egress of virus particles from the nucleus, modulation of the actin cytoskeleton and regulation of viral and cellular gene expression. Regulates the nuclear localization of viral envelopment factors UL34 and UL31, by phosphorylating the US3 kinase, indicating a role in nuclear egress. Disrupts host nuclear lamins, including LMNA and LMNB1. Phosphorylates the viral Fc receptor composed of glycoproteins E (gE) and I (gI). Phosphorylation of glycoprotein E (gE) by UL13 alters its subcellular localization, from the host early endosome to the plasma membrane. Participates in the transcriptional regulation of cellular and viral mRNAs mainly by phosphorylating the viral transcriptional regulator ICP22. Additional substrates have been identified, including UL41, UL49 or host EF1D. This Homo sapiens (Human) protein is Serine/threonine-protein kinase UL13.